The following is a 117-amino-acid chain: NADH-ubiquinone oxidoreductase chain 3 (117 aa).

3 consecutive transmembrane segments (helical) span residues 4-24 (IIII…LASI), 60-80 (ITII…MIII), and 86-106 (IMIW…GLYH).

This sequence belongs to the complex I subunit 3 family.

Its subcellular location is the mitochondrion membrane. It carries out the reaction a ubiquinone + NADH + 5 H(+)(in) = a ubiquinol + NAD(+) + 4 H(+)(out). In terms of biological role, core subunit of the mitochondrial membrane respiratory chain NADH dehydrogenase (Complex I) that is believed to belong to the minimal assembly required for catalysis. Complex I functions in the transfer of electrons from NADH to the respiratory chain. The immediate electron acceptor for the enzyme is believed to be ubiquinone. In Drosophila yakuba (Fruit fly), this protein is NADH-ubiquinone oxidoreductase chain 3 (mt:ND3).